A 194-amino-acid polypeptide reads, in one-letter code: NADH-ubiquinone oxidoreductase subunit NUO2 (194 aa).

Functionally, fungal-specific subunit of the mitochondrial membrane respiratory chain NADH dehydrogenase (Complex I). Complex I functions in the transfer of electrons from NADH to the respiratory chain. The immediate electron acceptor for the enzyme is believed to be ubiquinone. Plays a role in cell wall integrity and is involved in osmotic and oxidative resistance, yeast to hypha transition, and virulence via providing the ability to damage and invade host cells such as oral epithelial cells. In Candida albicans (strain SC5314 / ATCC MYA-2876) (Yeast), this protein is NADH-ubiquinone oxidoreductase subunit NUO2.